Here is a 58-residue protein sequence, read N- to C-terminus: Keratin-associated protein 21-3 (58 aa).

In terms of assembly, interacts with hair keratins.

In the hair cortex, hair keratin intermediate filaments are embedded in an interfilamentous matrix, consisting of hair keratin-associated proteins (KRTAP), which are essential for the formation of a rigid and resistant hair shaft through their extensive disulfide bond cross-linking with abundant cysteine residues of hair keratins. The matrix proteins include the high-sulfur and high-glycine-tyrosine keratins. This Homo sapiens (Human) protein is Keratin-associated protein 21-3 (KRTAP21-3).